A 321-amino-acid chain; its full sequence is MKTPWVEKYRPQTLDDVVGQEQIVGRLKRYVEEKSLPNIMFTGFAGVGKTTCALALAKSLLGEYWQQNFLELNASDARGIDTVRNEIKSFCKLKAVGAPFRIIFLDEVDNMTKDAQQALRREMEMYTKTSSFILSCNYSSKIIDPIQSRCAIFRFSPIKAANIIKRLKYIASEEGIEAEQSALENIVYFTQGDMRKSINILQASTTTENTVTEEAVYDVISRAKPKDVRKIINKALNHDFMEARDLLRDIMIIEGVSGDDLITQFYQEVAQMTQEELIPEVEFIKLMEYMSECDYRIREGSNPRLQLEALLSKFLLVKQDA.

ATP is bound at residue 43 to 50 (GFAGVGKT).

The protein belongs to the activator 1 small subunits family. RfcS subfamily. Heteromultimer composed of small subunits (RfcS) and large subunits (RfcL).

Its function is as follows. Part of the RFC clamp loader complex which loads the PCNA sliding clamp onto DNA. The protein is Replication factor C small subunit of Methanosphaera stadtmanae (strain ATCC 43021 / DSM 3091 / JCM 11832 / MCB-3).